The following is a 366-amino-acid chain: RNA 3'-terminal phosphate cyclase (366 aa).

ATP is bound by residues Gln104, Pro131, Tyr294, Asp297, Gln298, and His320. The active-site Tele-AMP-histidine intermediate is His320.

Belongs to the RNA 3'-terminal cyclase family. Type 1 subfamily. In terms of tissue distribution, detected in retinal ganglion cells (RGCs) (at protein level).

The protein resides in the nucleus. The protein localises to the nucleoplasm. The catalysed reaction is a 3'-end 3'-phospho-ribonucleotide-RNA + ATP = a 3'-end 2',3'-cyclophospho-ribonucleotide-RNA + AMP + diphosphate. Catalyzes the conversion of 3'-phosphate to a 2',3'-cyclic phosphodiester at the end of RNA. The mechanism of action of the enzyme occurs in 3 steps: (A) adenylation of the enzyme by ATP; (B) transfer of adenylate to an RNA-N3'P to produce RNA-N3'PP5'A; (C) and attack of the adjacent 2'-hydroxyl on the 3'-phosphorus in the diester linkage to produce the cyclic end product. Likely functions in some aspects of cellular RNA processing. Function plays an important role in regulating axon regeneration by inhibiting central nervous system (CNS) axon regeneration following optic nerve injury. The chain is RNA 3'-terminal phosphate cyclase from Mus musculus (Mouse).